A 256-amino-acid polypeptide reads, in one-letter code: Thiazole synthase (256 aa).

Residue Lys91 is the Schiff-base intermediate with DXP of the active site. Residues Gly152, 179–180 (AG), and 201–202 (NT) contribute to the 1-deoxy-D-xylulose 5-phosphate site.

The protein belongs to the ThiG family. Homotetramer. Forms heterodimers with either ThiH or ThiS.

The protein resides in the cytoplasm. The catalysed reaction is [ThiS sulfur-carrier protein]-C-terminal-Gly-aminoethanethioate + 2-iminoacetate + 1-deoxy-D-xylulose 5-phosphate = [ThiS sulfur-carrier protein]-C-terminal Gly-Gly + 2-[(2R,5Z)-2-carboxy-4-methylthiazol-5(2H)-ylidene]ethyl phosphate + 2 H2O + H(+). It participates in cofactor biosynthesis; thiamine diphosphate biosynthesis. Functionally, catalyzes the rearrangement of 1-deoxy-D-xylulose 5-phosphate (DXP) to produce the thiazole phosphate moiety of thiamine. Sulfur is provided by the thiocarboxylate moiety of the carrier protein ThiS. In vitro, sulfur can be provided by H(2)S. This is Thiazole synthase from Erwinia tasmaniensis (strain DSM 17950 / CFBP 7177 / CIP 109463 / NCPPB 4357 / Et1/99).